Here is a 444-residue protein sequence, read N- to C-terminus: tRNA-2-methylthio-N(6)-dimethylallyladenosine synthase (444 aa).

The 115-residue stretch at 3 to 117 folds into the MTTase N-terminal domain; it reads RGLYIESYGC…LPELIMKVKR (115 aa). 6 residues coordinate [4Fe-4S] cluster: Cys-12, Cys-48, Cys-80, Cys-155, Cys-159, and Cys-162. The region spanning 141-374 is the Radical SAM core domain; the sequence is ANGGVSAYVS…LLTKQQLQFN (234 aa). Positions 375–441 constitute a TRAM domain; sequence KSMEGRVMDV…QNSLEGTVLS (67 aa).

It belongs to the methylthiotransferase family. MiaB subfamily. As to quaternary structure, monomer. Requires [4Fe-4S] cluster as cofactor.

The protein localises to the cytoplasm. It carries out the reaction N(6)-dimethylallyladenosine(37) in tRNA + (sulfur carrier)-SH + AH2 + 2 S-adenosyl-L-methionine = 2-methylsulfanyl-N(6)-dimethylallyladenosine(37) in tRNA + (sulfur carrier)-H + 5'-deoxyadenosine + L-methionine + A + S-adenosyl-L-homocysteine + 2 H(+). Its function is as follows. Catalyzes the methylthiolation of N6-(dimethylallyl)adenosine (i(6)A), leading to the formation of 2-methylthio-N6-(dimethylallyl)adenosine (ms(2)i(6)A) at position 37 in tRNAs that read codons beginning with uridine. The protein is tRNA-2-methylthio-N(6)-dimethylallyladenosine synthase of Anaplasma phagocytophilum (strain HZ).